We begin with the raw amino-acid sequence, 892 residues long: Alpha-actinin-1 (892 aa).

M1 is modified (N-acetylmethionine). The tract at residues 1-247 is actin-binding; sequence MDHYDSQQTN…IMTYVSSFYH (247 aa). S6 is subject to Phosphoserine. Y12 bears the Phosphotyrosine; by FAK1 mark. Calponin-homology (CH) domains follow at residues 31 to 135 and 144 to 250; these read KQQR…LRFA and TSAK…HAFS. 2 positions are modified to N6-acetyllysine: K95 and K195. Spectrin repeat units follow at residues 274–384, 394–499, 509–620, and 630–733; these read QLME…WLLN, HLAE…ALER, QLYL…ALTE, and RLRK…EVEN. The segment at 274–733 is interaction with DDN; sequence QLMEDYEKLA…IARTINEVEN (460 aa). The residue at position 471 (S471) is a Phosphoserine. K676 carries the N6-acetyllysine modification. The residue at position 677 (S677) is a Phosphoserine. 2 consecutive EF-hand domains span residues 746 to 781 and 787 to 822; these read EQMNEFRASFNHFDRDHSGTLGPEEFKACLISLGYD and QGEAEFARIMSIVDPNRLGVVTFQAFIDFMSRETAD. The Ca(2+) site is built by D759, D761, S763, T765, and E770. The residue at position 890 (S890) is a Phosphoserine.

This sequence belongs to the alpha-actinin family. In terms of assembly, homodimer; antiparallel. Interacts with MYOZ2, TTID and LPP. Interacts with DDN. Interacts with PSD. Interacts with MICALL2. Interacts with DNM2 and CTTN. Interacts with PDLIM1. Interacts with PDLIM2. Interacts with PDLIM4 (via PDZ domain). Interacts with IGSF8.

Its subcellular location is the cytoplasm. It localises to the cytoskeleton. It is found in the myofibril. The protein localises to the sarcomere. The protein resides in the z line. Its subcellular location is the cell membrane. It localises to the cell junction. It is found in the cell projection. The protein localises to the ruffle. F-actin cross-linking protein which is thought to anchor actin to a variety of intracellular structures. Association with IGSF8 regulates the immune synapse formation and is required for efficient T-cell activation. This Macaca fascicularis (Crab-eating macaque) protein is Alpha-actinin-1 (ACTN1).